Consider the following 482-residue polypeptide: Glutamate--tRNA ligase (482 aa).

The short motif at 9 to 19 (PSPTGPLHIGG) is the 'HIGH' region element. The 'KMSKS' region motif lies at 250 to 254 (KMSKR). Lys253 is an ATP binding site.

This sequence belongs to the class-I aminoacyl-tRNA synthetase family. Glutamate--tRNA ligase type 1 subfamily. As to quaternary structure, monomer.

It localises to the cytoplasm. The catalysed reaction is tRNA(Glu) + L-glutamate + ATP = L-glutamyl-tRNA(Glu) + AMP + diphosphate. Its function is as follows. Catalyzes the attachment of glutamate to tRNA(Glu) in a two-step reaction: glutamate is first activated by ATP to form Glu-AMP and then transferred to the acceptor end of tRNA(Glu). This is Glutamate--tRNA ligase from Desulforamulus reducens (strain ATCC BAA-1160 / DSM 100696 / MI-1) (Desulfotomaculum reducens).